The chain runs to 417 residues: Serine hydroxymethyltransferase (417 aa).

Residues Leu-121 and Gly-125–Leu-127 contribute to the (6S)-5,6,7,8-tetrahydrofolate site. Lys-230 is modified (N6-(pyridoxal phosphate)lysine). Residue Ser-355–Phe-357 participates in (6S)-5,6,7,8-tetrahydrofolate binding.

It belongs to the SHMT family. As to quaternary structure, homodimer. Pyridoxal 5'-phosphate serves as cofactor.

Its subcellular location is the cytoplasm. It catalyses the reaction (6R)-5,10-methylene-5,6,7,8-tetrahydrofolate + glycine + H2O = (6S)-5,6,7,8-tetrahydrofolate + L-serine. The protein operates within one-carbon metabolism; tetrahydrofolate interconversion. It participates in amino-acid biosynthesis; glycine biosynthesis; glycine from L-serine: step 1/1. Its function is as follows. Catalyzes the reversible interconversion of serine and glycine with tetrahydrofolate (THF) serving as the one-carbon carrier. This reaction serves as the major source of one-carbon groups required for the biosynthesis of purines, thymidylate, methionine, and other important biomolecules. Also exhibits THF-independent aldolase activity toward beta-hydroxyamino acids, producing glycine and aldehydes, via a retro-aldol mechanism. This Ruthia magnifica subsp. Calyptogena magnifica protein is Serine hydroxymethyltransferase.